Reading from the N-terminus, the 100-residue chain is Gas vesicle protein J (100 aa).

It belongs to the gas vesicle GvpA family. Interacts with GvpA.

It localises to the gas vesicle. Its function is as follows. A minor component of the gas vesicle, might be involved in nucleating gas vesicle formation. This protein could be important for the shape determination of the gas vesicle. Gas vesicles (GV) are hollow, gas filled proteinaceous nanostructures. During planktonic growth they allow positioning of the organism at a favorable depth for light or nutrient acquisition. In terms of biological role, when a minimal gvp locus (gvpA2-gvpR-gvpN-gvpF-gvpG-gvpL-gvpS-gvpK-gvpJ-gvpT-gvpU, called pNL29) is expressed in E.coli gas vesicles are made. In Priestia megaterium (Bacillus megaterium), this protein is Gas vesicle protein J.